The sequence spans 435 residues: Tol-Pal system protein TolB (435 aa).

An N-terminal signal peptide occupies residues 1–28 (MTKCSFFRAILVAVGLMTAAVFATPANA). The interval 288-310 (STAAIDTSPSYSPDGARVSFESD) is disordered.

The protein belongs to the TolB family. The Tol-Pal system is composed of five core proteins: the inner membrane proteins TolA, TolQ and TolR, the periplasmic protein TolB and the outer membrane protein Pal. They form a network linking the inner and outer membranes and the peptidoglycan layer.

The protein localises to the periplasm. Functionally, part of the Tol-Pal system, which plays a role in outer membrane invagination during cell division and is important for maintaining outer membrane integrity. The sequence is that of Tol-Pal system protein TolB from Rhizobium johnstonii (strain DSM 114642 / LMG 32736 / 3841) (Rhizobium leguminosarum bv. viciae).